Reading from the N-terminus, the 94-residue chain is Scorpine-like-1 (94 aa).

The signal sequence occupies residues 1–18 (MNTKFTVLIFLGVIVVSY). Residues 54–94 (EYGCMMDISWNKDCQRHCQSTEQKDGICHGMKCKCGKPRSY) enclose the BetaSPN-type CS-alpha/beta domain. 3 disulfides stabilise this stretch: Cys57-Cys81, Cys67-Cys86, and Cys71-Cys88.

Belongs to the long chain scorpion toxin family. Class 3 subfamily. As to expression, expressed by the venom gland.

Its subcellular location is the secreted. In terms of biological role, has antibacterial activity. In Urodacus yaschenkoi (Inland robust scorpion), this protein is Scorpine-like-1.